Reading from the N-terminus, the 461-residue chain is Bifunctional protein HldE (461 aa).

The tract at residues 1-311 (MKKILVVGDL…EEIALILNQT (311 aa)) is ribokinase. 191–194 (NRAE) serves as a coordination point for ATP. D260 is a catalytic residue. The interval 332–461 (FTNGCFDLLH…IEKIKRTHND (130 aa)) is cytidylyltransferase.

This sequence in the N-terminal section; belongs to the carbohydrate kinase PfkB family. In the C-terminal section; belongs to the cytidylyltransferase family. Homodimer.

It carries out the reaction D-glycero-beta-D-manno-heptose 7-phosphate + ATP = D-glycero-beta-D-manno-heptose 1,7-bisphosphate + ADP + H(+). It catalyses the reaction D-glycero-beta-D-manno-heptose 1-phosphate + ATP + H(+) = ADP-D-glycero-beta-D-manno-heptose + diphosphate. The protein operates within nucleotide-sugar biosynthesis; ADP-L-glycero-beta-D-manno-heptose biosynthesis; ADP-L-glycero-beta-D-manno-heptose from D-glycero-beta-D-manno-heptose 7-phosphate: step 1/4. It participates in nucleotide-sugar biosynthesis; ADP-L-glycero-beta-D-manno-heptose biosynthesis; ADP-L-glycero-beta-D-manno-heptose from D-glycero-beta-D-manno-heptose 7-phosphate: step 3/4. Functionally, catalyzes the phosphorylation of D-glycero-D-manno-heptose 7-phosphate at the C-1 position to selectively form D-glycero-beta-D-manno-heptose-1,7-bisphosphate. In terms of biological role, catalyzes the ADP transfer from ATP to D-glycero-beta-D-manno-heptose 1-phosphate, yielding ADP-D-glycero-beta-D-manno-heptose. The chain is Bifunctional protein HldE from Helicobacter pylori (strain P12).